The following is a 152-amino-acid chain: Ribosome maturation factor RimP (152 aa).

Belongs to the RimP family.

Its subcellular location is the cytoplasm. Required for maturation of 30S ribosomal subunits. This chain is Ribosome maturation factor RimP, found in Aeromonas salmonicida (strain A449).